The following is a 315-amino-acid chain: Gamma-hemolysin component C (315 aa).

A signal peptide spans 1 to 29; it reads MLKNKILATTLSVSLLAPLANPLLENAKA.

Belongs to the aerolysin family. In terms of assembly, toxicity requires sequential binding and synergistic association of a class S and a class F component which form heterooligomeric complexes. HlgC (class S) associates with HlgB (class F) thus forming an CB toxin.

Functionally, toxin that seems to act by forming pores in the membrane of the cell. Has a hemolytic and a leucotoxic activity. This Staphylococcus aureus (strain MSSA476) protein is Gamma-hemolysin component C (hlgC).